The following is a 310-amino-acid chain: Mitogen-activated protein kinase kinase 9 (310 aa).

The Protein kinase domain maps to leucine 47–leucine 306. ATP contacts are provided by residues leucine 53 to valine 61 and lysine 76. Aspartate 167 (proton acceptor) is an active-site residue. 2 positions are modified to phosphoserine: serine 195 and serine 201. Threonine 205 is subject to Phosphothreonine.

Belongs to the protein kinase superfamily. STE Ser/Thr protein kinase family. MAP kinase kinase subfamily. Phosphorylation at Ser-195 and Ser-201 by MAP kinase kinase kinases positively regulates kinase activity. Autophosphorylated.

It localises to the cytoplasm. The protein localises to the nucleus. It carries out the reaction L-seryl-[protein] + ATP = O-phospho-L-seryl-[protein] + ADP + H(+). It catalyses the reaction L-threonyl-[protein] + ATP = O-phospho-L-threonyl-[protein] + ADP + H(+). The enzyme catalyses L-tyrosyl-[protein] + ATP = O-phospho-L-tyrosyl-[protein] + ADP + H(+). Functionally, MKK9-MPK3/MPK6 module phosphorylates and activates EIN3, leading to the promotion of EIN3-mediated transcription in ethylene signaling. Autophosphorylates and also phosphorylates MPK3 and MPK6. Plays an important role in ethylene and camalexin biosynthesis and in salt stress response. MKK9-MPK6 module positively regulates leaf senescence. This is Mitogen-activated protein kinase kinase 9 (MKK9) from Arabidopsis thaliana (Mouse-ear cress).